The sequence spans 204 residues: MISRMKGIILEKQPPWILLDIQGMGYDIQLPMTCFYQLPELGQEAIIFTHFVVREDAQLLYGFHHPKERAMFSELIKVNGVGPKLGLAILSGMSSEEFICALEKEDISNLIKLPGVGKKTAERLLVEMKDRIKNLNKNLFKSTADHMLSSVSTDLSAKSAEAEAISALISLGYKPQEAAQLIKNIAQPDLDSQALIKHALRSTL.

Residues 1 to 64 (MISRMKGIIL…EDAQLLYGFH (64 aa)) form a domain I region. The segment at 65 to 143 (HPKERAMFSE…NLNKNLFKST (79 aa)) is domain II. Residues 144–155 (ADHMLSSVSTDL) are flexible linker. Residues 156–204 (SAKSAEAEAISALISLGYKPQEAAQLIKNIAQPDLDSQALIKHALRSTL) are domain III.

Belongs to the RuvA family. In terms of assembly, homotetramer. Forms an RuvA(8)-RuvB(12)-Holliday junction (HJ) complex. HJ DNA is sandwiched between 2 RuvA tetramers; dsDNA enters through RuvA and exits via RuvB. An RuvB hexamer assembles on each DNA strand where it exits the tetramer. Each RuvB hexamer is contacted by two RuvA subunits (via domain III) on 2 adjacent RuvB subunits; this complex drives branch migration. In the full resolvosome a probable DNA-RuvA(4)-RuvB(12)-RuvC(2) complex forms which resolves the HJ.

It localises to the cytoplasm. In terms of biological role, the RuvA-RuvB-RuvC complex processes Holliday junction (HJ) DNA during genetic recombination and DNA repair, while the RuvA-RuvB complex plays an important role in the rescue of blocked DNA replication forks via replication fork reversal (RFR). RuvA specifically binds to HJ cruciform DNA, conferring on it an open structure. The RuvB hexamer acts as an ATP-dependent pump, pulling dsDNA into and through the RuvAB complex. HJ branch migration allows RuvC to scan DNA until it finds its consensus sequence, where it cleaves and resolves the cruciform DNA. This is Holliday junction branch migration complex subunit RuvA from Hamiltonella defensa subsp. Acyrthosiphon pisum (strain 5AT).